Consider the following 209-residue polypeptide: Large ribosomal subunit protein uL3 (209 aa).

Residues glutamine 128–asparagine 152 form a disordered region.

This sequence belongs to the universal ribosomal protein uL3 family. In terms of assembly, part of the 50S ribosomal subunit. Forms a cluster with proteins L14 and L19.

Its function is as follows. One of the primary rRNA binding proteins, it binds directly near the 3'-end of the 23S rRNA, where it nucleates assembly of the 50S subunit. The chain is Large ribosomal subunit protein uL3 from Halalkalibacterium halodurans (strain ATCC BAA-125 / DSM 18197 / FERM 7344 / JCM 9153 / C-125) (Bacillus halodurans).